The chain runs to 188 residues: Elongation factor P (188 aa).

K34 bears the N6-(3,6-diaminohexanoyl)-5-hydroxylysine mark.

Belongs to the elongation factor P family. In terms of processing, may be beta-lysylated on the epsilon-amino group of Lys-34 by the combined action of EpmA and EpmB, and then hydroxylated on the C5 position of the same residue by EpmC (if this protein is present). Lysylation is critical for the stimulatory effect of EF-P on peptide-bond formation. The lysylation moiety may extend toward the peptidyltransferase center and stabilize the terminal 3-CCA end of the tRNA. Hydroxylation of the C5 position on Lys-34 may allow additional potential stabilizing hydrogen-bond interactions with the P-tRNA.

The protein resides in the cytoplasm. The protein operates within protein biosynthesis; polypeptide chain elongation. In terms of biological role, involved in peptide bond synthesis. Alleviates ribosome stalling that occurs when 3 or more consecutive Pro residues or the sequence PPG is present in a protein, possibly by augmenting the peptidyl transferase activity of the ribosome. Modification of Lys-34 is required for alleviation. This is Elongation factor P from Xanthomonas campestris pv. campestris (strain B100).